Reading from the N-terminus, the 62-residue chain is Metallothionein-4 (62 aa).

Residues cysteine 6, cysteine 8, cysteine 14, cysteine 16, cysteine 20, cysteine 22, cysteine 25, cysteine 27, cysteine 30, cysteine 34, cysteine 35, cysteine 37, cysteine 38, cysteine 42, cysteine 45, cysteine 49, cysteine 51, cysteine 58, cysteine 60, and cysteine 61 each coordinate a divalent metal cation.

The protein belongs to the metallothionein superfamily. Type 1 family. In terms of tissue distribution, expressed exclusively in stratified squamous epithelia associated with oral epithelia, esophagus, upper stomach, tail, footpads and neonatal skin.

Seems to bind zinc and copper. Could play a special role in regulating zinc metabolism during the differentiation of stratified epithelia. In Mus musculus (Mouse), this protein is Metallothionein-4 (Mt4).